The chain runs to 228 residues: Probable transcriptional regulatory protein SilR (228 aa).

Residues Lys2 to Leu116 enclose the Response regulatory domain. Asp51 carries the 4-aspartylphosphate modification. The segment at residues Glu125–Ile225 is a DNA-binding region (ompR/PhoB-type).

Phosphorylated by SilS.

The protein resides in the cytoplasm. Component of the sil cation-efflux system that confers resistance to silver. Probable member of a two-component regulatory system SilS/SilR. This Salmonella typhimurium protein is Probable transcriptional regulatory protein SilR (silR).